We begin with the raw amino-acid sequence, 60 residues long: Putative mercuric resistance protein (60 aa).

This is Putative mercuric resistance protein from Pseudomonas aeruginosa.